The following is a 260-amino-acid chain: Metallo-beta-lactamase domain-containing protein 1 (260 aa).

Positions 118, 120, 122, 123, 173, 196, and 235 each coordinate Zn(2+).

Belongs to the metallo-beta-lactamase superfamily. Glyoxalase II family. As to quaternary structure, homodimer. Requires Zn(2+) as cofactor.

The protein localises to the cytoplasm. Its subcellular location is the cytosol. It localises to the nucleus. The catalysed reaction is a ribonucleotidyl-ribonucleotide-RNA + H2O = a 3'-end ribonucleotide-RNA + a 5'-end 5'-phospho-ribonucleoside-RNA + H(+). In terms of biological role, endoribonuclease that catalyzes the hydrolysis of histone-coding pre-mRNA 3'-end. Involved in histone pre-mRNA processing during the S-phase of the cell cycle, which is required for entering/progressing through S-phase. Cleaves histone pre-mRNA at a major and a minor cleavage site after the 5'-ACCCA-3' and the 5'-ACCCACA-3' sequence, respectively, and located downstream of the stem-loop. May require the presence of the HDE element located at the histone pre-RNA 3'-end to avoid non-specific cleavage. The protein is Metallo-beta-lactamase domain-containing protein 1 of Mus musculus (Mouse).